The chain runs to 187 residues: MKIMGILGIQGDLEEHEDAVRKVNCIPKRIRTVDDLDGIDALIIPGGESTTIGKLMVSYGFIDKIRNLKIPILGTCAGMVLLSKGTGKEQPLLEMLNVTIKRNAYGSQKDSFEKEIVLGGKKVHAVFIRAPQVGEILSKDVEIISKDDGNIVGVKEGNIMAISFHPELSEDGVIVYEYFLKNFVEKN.

47-49 (GES) lines the L-glutamine pocket. The active-site Nucleophile is Cys76. L-glutamine-binding positions include Arg102 and 128-129 (IR). Active-site charge relay system residues include His165 and Glu167.

The protein belongs to the glutaminase PdxT/SNO family. As to quaternary structure, in the presence of PdxS, forms a dodecamer of heterodimers. Only shows activity in the heterodimer.

The enzyme catalyses aldehydo-D-ribose 5-phosphate + D-glyceraldehyde 3-phosphate + L-glutamine = pyridoxal 5'-phosphate + L-glutamate + phosphate + 3 H2O + H(+). It carries out the reaction L-glutamine + H2O = L-glutamate + NH4(+). It participates in cofactor biosynthesis; pyridoxal 5'-phosphate biosynthesis. Its function is as follows. Catalyzes the hydrolysis of glutamine to glutamate and ammonia as part of the biosynthesis of pyridoxal 5'-phosphate. The resulting ammonia molecule is channeled to the active site of PdxS. The protein is Pyridoxal 5'-phosphate synthase subunit PdxT of Methanococcus maripaludis (strain C7 / ATCC BAA-1331).